A 301-amino-acid polypeptide reads, in one-letter code: Probable serine acetyltransferase 3 (301 aa).

Residues 280 to 301 (IGKKAEPQRELPGVTMEQRWSD) are disordered.

It belongs to the transferase hexapeptide repeat family. In terms of assembly, homomultimer.

The catalysed reaction is L-serine + acetyl-CoA = O-acetyl-L-serine + CoA. Its pathway is amino-acid biosynthesis; L-cysteine biosynthesis; L-cysteine from L-serine: step 1/2. This is Probable serine acetyltransferase 3 (SAT3) from Oryza sativa subsp. japonica (Rice).